Reading from the N-terminus, the 367-residue chain is Secondary metabolism regulator laeA (367 aa).

Positions M1–N82 are disordered. The span at L19 to M41 shows a compositional bias: polar residues. Basic and acidic residues-rich tracts occupy residues T47–P56 and K71–N82.

It belongs to the methyltransferase superfamily. LaeA methyltransferase family. Component of the heterotrimeric velvet complex composed of laeA, veA and velB; VeA acting as a bridging protein between laeA and velB.

It localises to the nucleus. It catalyses the reaction L-methionyl-[protein] + S-adenosyl-L-methionine = S-methyl-L-methionyl-[protein] + S-adenosyl-L-homocysteine. Methyltransferase that performs automethylation. No other methyl-accepting substrate has been identified yet. Component of the velvet transcription factor complex that acts as a global regulator for secondary metabolite gene expression. Controls the expression of the monacolin K gene clusters. Also regulates pigmentation. This chain is Secondary metabolism regulator laeA, found in Monascus pilosus (Red mold).